Here is a 1149-residue protein sequence, read N- to C-terminus: Guanine nucleotide exchange factor DBS (1149 aa).

A CRAL-TRIO domain is found at 52–224 (AATASDEIMH…DLGGTLDYCH (173 aa)). A Spectrin repeat occupies 351-456 (LQLRHFEQGF…VTRRRGLLSK (106 aa)). A phosphoserine mark is found at Ser457, Ser462, Ser471, and Ser480. Residues 503 to 529 (LETGAENKIQELNEIYKEYECILNQDL) adopt a coiled-coil conformation. A disordered region spans residues 555-627 (KKLAAKQTRP…RTSSTGEEEE (73 aa)). Over residues 583–594 (PGSWRSSENSSS) the composition is skewed to low complexity. Residues 607 to 616 (AKSEMSEPRQ) show a composition bias toward basic and acidic residues. Ser621 carries the post-translational modification Phosphoserine. Residue Thr622 is modified to Phosphothreonine. In terms of domain architecture, DH spans 632–812 (LRRHVMNELL…LGILKAVNDS (181 aa)). A PH domain is found at 841–950 (TDHKKGHTKV…IRKVLTSQLQ (110 aa)). The disordered stretch occupies residues 956 to 1033 (SQHRALEQSH…EAPEEDGGWS (78 aa)). The span at 966–978 (SLPLPTPSSTSPT) shows a compositional bias: low complexity. Phosphoserine is present on residues Ser1033, Ser1034, Ser1041, and Ser1042. Residues 1055 to 1116 (LVPGKYTVVM…PASSLSTLLG (62 aa)) enclose the SH3 domain.

It belongs to the MCF2 family. Interacts with GTP-bound RAC1. Interacts with CDC42. Interacts with RHOA. Interacts with CCPG1, which results in specific inhibition of its exchange activity toward RHOA, but does not affect its activity on CDC42. As to expression, expressed at low levels in several hemopoietic cell lines and in thymus and spleen, and at higher levels in other tissues, particularly in brain.

It is found in the cytoplasm. Its subcellular location is the cell membrane. Guanine nucleotide exchange factor that catalyzes guanine nucleotide exchange on RHOA and CDC42, and thereby contributes to the regulation of RHOA and CDC42 signaling pathways. Seems to lack activity with RAC1. Becomes activated and highly tumorigenic by truncation of the N-terminus. This Mus musculus (Mouse) protein is Guanine nucleotide exchange factor DBS (Mcf2l).